A 286-amino-acid polypeptide reads, in one-letter code: MTALTESSTSKFVKINEKGFSDFNIHYNEAGNGETVIMLHGGGPGAGGWSNYYRNVGPFVDAGYRVILKDSPGFNKSDAVVMDEQRGLVNARAVKGLMDALDIDRAHLVGNSMGGATALNFALEYPDRIGKLILMGPGGLGPSMFAPMPMEGIKLLFKLYAEPSYETLKQMLQVFLYDQSLITEELLQGRWEAIQRQPEHLKNFLISAQKAPLSTWDVTARLGEIKAKTFITWGRDDRFVPLDHGLKLLWNIDDARLHVFSKCGHWAQWEHADEFNRLVIDFLRHA.

Substrate is bound by residues 42–43 (GG), N51, N111, S180, and R190. H265 acts as the Proton acceptor in catalysis. Residue W266 coordinates substrate.

It belongs to the AB hydrolase superfamily. BphD family. In terms of assembly, homodimer.

The enzyme catalyses 2,6-dioxo-6-phenylhexa-3-enoate + H2O = 2-oxopent-4-enoate + benzoate + H(+). Its pathway is xenobiotic degradation; biphenyl degradation; 2-hydroxy-2,4-pentadienoate and benzoate from biphenyl: step 4/4. Its activity is regulated as follows. Inhibited by 3-Cl HOPDA. In terms of biological role, catalyzes an unusual C-C bond hydrolysis of 2-hydroxy-6-oxo-6-phenylhexa-2,4-dienoic acid (HOPDA) to produce benzoic acid and 2-hydroxy-2,4-pentadienoic acid (HPD). This Paraburkholderia xenovorans (strain LB400) protein is 2-hydroxy-6-oxo-6-phenylhexa-2,4-dienoate hydrolase (bphD).